The chain runs to 198 residues: Large ribosomal subunit protein bL12m (198 aa).

Residues 1–36 (MLPAAARPLWGPCLGLRAAAFRLARRQVPCVCAVRH) constitute a mitochondrion transit peptide. Residues Lys-125, Lys-138, Lys-142, and Lys-144 each carry the N6-acetyllysine modification. N6-acetyllysine; alternate is present on Lys-150. An N6-succinyllysine; alternate modification is found at Lys-150. Lys-150 is covalently cross-linked (Glycyl lysine isopeptide (Lys-Gly) (interchain with G-Cter in ubiquitin)). An N6-succinyllysine modification is found at Lys-162. Residues Lys-163 and Lys-173 each carry the N6-acetyllysine modification. Lys-178 is subject to N6-acetyllysine; alternate. Lys-178 carries the N6-succinyllysine; alternate modification. Lys-185 carries the N6-acetyllysine modification.

Belongs to the bacterial ribosomal protein bL12 family. As to quaternary structure, component of the mitochondrial large ribosomal subunit (mt-LSU). Mature mammalian 55S mitochondrial ribosomes consist of a small (28S) and a large (39S) subunit. The 28S small subunit contains a 12S ribosomal RNA (12S mt-rRNA) and 30 different proteins. The 39S large subunit contains a 16S rRNA (16S mt-rRNA), a copy of mitochondrial valine transfer RNA (mt-tRNA(Val)), which plays an integral structural role, and 52 different proteins. bL12m interacts with NOA1. In terms of processing, two mature forms are produced by differential two-step proteolytic cleavage. Cleaved by the mitochondrial processing protease to produce the long mature form and subsequently by the mitochondrial intermediate protease to produce the short mature form. In the presence of CUL3, undergoes 'Lys-63'-linked ubiquitination at Lys-150 which results in proteasomal degradation.

It is found in the mitochondrion matrix. As a component of the mitochondrial large ribosomal subunit, plays a role in mitochondrial translation. When present in mitochondria as a free protein not associated with the ribosome, associates with mitochondrial RNA polymerase POLRMT to activate transcription. Required for POLRMT stability. The polypeptide is Large ribosomal subunit protein bL12m (MRPL12) (Homo sapiens (Human)).